A 402-amino-acid polypeptide reads, in one-letter code: Cysteine-rich venom protein (402 aa).

The first 13 residues, 1–13 (MNLALFIIFATIF), serve as a signal peptide directing secretion. Residues 57-199 (LETHNQLRNK…VKKVLYTCNY (143 aa)) form the SCP domain.

This sequence belongs to the CRISP family. Contains 7 disulfide bonds. As to expression, expressed by the venom gland.

Its subcellular location is the secreted. This is Cysteine-rich venom protein from Tityus serrulatus (Brazilian scorpion).